We begin with the raw amino-acid sequence, 145 residues long: Deoxyuridine 5'-triphosphate nucleotidohydrolase (145 aa).

Residues 62 to 64 (RSG), Asn75, and 79 to 81 (TVD) contribute to the substrate site.

It belongs to the dUTPase family. Mg(2+) serves as cofactor.

The catalysed reaction is dUTP + H2O = dUMP + diphosphate + H(+). It participates in pyrimidine metabolism; dUMP biosynthesis; dUMP from dCTP (dUTP route): step 2/2. Its function is as follows. This enzyme is involved in nucleotide metabolism: it produces dUMP, the immediate precursor of thymidine nucleotides and it decreases the intracellular concentration of dUTP so that uracil cannot be incorporated into DNA. The chain is Deoxyuridine 5'-triphosphate nucleotidohydrolase from Gloeothece citriformis (strain PCC 7424) (Cyanothece sp. (strain PCC 7424)).